Consider the following 386-residue polypeptide: Succinate--CoA ligase [ADP-forming] subunit beta (386 aa).

The region spanning 9–244 (KEILRSYGVS…LDEEDPKEVE (236 aa)) is the ATP-grasp domain. ATP is bound by residues K46, 53–55 (GRG), E99, C102, and E107. Residues N199 and D213 each coordinate Mg(2+). Substrate is bound by residues N264 and 321–323 (GIM).

The protein belongs to the succinate/malate CoA ligase beta subunit family. Heterotetramer of two alpha and two beta subunits. Mg(2+) is required as a cofactor.

It catalyses the reaction succinate + ATP + CoA = succinyl-CoA + ADP + phosphate. It carries out the reaction GTP + succinate + CoA = succinyl-CoA + GDP + phosphate. It participates in carbohydrate metabolism; tricarboxylic acid cycle; succinate from succinyl-CoA (ligase route): step 1/1. Its function is as follows. Succinyl-CoA synthetase functions in the citric acid cycle (TCA), coupling the hydrolysis of succinyl-CoA to the synthesis of either ATP or GTP and thus represents the only step of substrate-level phosphorylation in the TCA. The beta subunit provides nucleotide specificity of the enzyme and binds the substrate succinate, while the binding sites for coenzyme A and phosphate are found in the alpha subunit. The chain is Succinate--CoA ligase [ADP-forming] subunit beta from Geobacillus thermodenitrificans (strain NG80-2).